The sequence spans 139 residues: Gonadotropin subunit beta-2 (139 aa).

An N-terminal signal peptide occupies residues 1–24 (MFPLVLSLFLGATSDIWPLAPAEA). Cystine bridges form between Cys30-Cys78, Cys44-Cys93, Cys47-Cys131, Cys55-Cys109, Cys59-Cys111, and Cys114-Cys121. The N-linked (GlcNAc...) asparagine glycan is linked to Asn34.

The protein belongs to the glycoprotein hormones subunit beta family. As to quaternary structure, heterodimer of an alpha and a beta chain.

The protein resides in the secreted. In terms of biological role, involved in gametogenesis and steroidogenesis. The polypeptide is Gonadotropin subunit beta-2 (cgbb) (Morone saxatilis (Striped bass)).